The following is an 84-amino-acid chain: Small ribosomal subunit protein bS16 (84 aa).

This sequence belongs to the bacterial ribosomal protein bS16 family.

The polypeptide is Small ribosomal subunit protein bS16 (Burkholderia mallei (strain NCTC 10247)).